Here is a 93-residue protein sequence, read N- to C-terminus: Small ribosomal subunit protein uS19 (93 aa).

Belongs to the universal ribosomal protein uS19 family.

In terms of biological role, protein S19 forms a complex with S13 that binds strongly to the 16S ribosomal RNA. The chain is Small ribosomal subunit protein uS19 (rpsS) from Helicobacter pylori (strain ATCC 700392 / 26695) (Campylobacter pylori).